A 203-amino-acid chain; its full sequence is Arcadin-2 (203 aa).

As to quaternary structure, interacts with crenactin.

Its subcellular location is the cytoplasm. The protein localises to the cytoskeleton. Its function is as follows. Part of an actin-like archaeal cytoskeleton. Prevents polymerization of crenactin filaments by binding its C-terminus into crenactin's hydrophobic groove. May act by competing with the D-loop of the following crenactin subunit for the hydrophobic groove. The polypeptide is Arcadin-2 (Pyrobaculum calidifontis (strain DSM 21063 / JCM 11548 / VA1)).